We begin with the raw amino-acid sequence, 134 residues long: Small ribosomal subunit protein bS6 (134 aa).

The interval 99 to 134 is disordered; the sequence is PSQLAKSADEKRARKAPRSENFDNDQDDESNDDSDE. Basic and acidic residues predominate over residues 105-119; it reads SADEKRARKAPRSEN. The segment covering 120-134 has biased composition (acidic residues); sequence FDNDQDDESNDDSDE.

This sequence belongs to the bacterial ribosomal protein bS6 family.

Functionally, binds together with bS18 to 16S ribosomal RNA. The protein is Small ribosomal subunit protein bS6 of Psychrobacter sp. (strain PRwf-1).